Here is a 425-residue protein sequence, read N- to C-terminus: Protein disulfide isomerase-like 5-3 (425 aa).

Residues 1-28 (MGKPTLPPVVVVVVLLLLVVVLPATTCG) form the signal peptide. Positions 29–153 (ADAGGGGEAE…LVENLKKLVA (125 aa)) constitute a Thioredoxin domain. Catalysis depends on nucleophile residues cysteine 75 and cysteine 78. Cysteine 75 and cysteine 78 form a disulfide bridge. A helical transmembrane segment spans residues 386 to 406 (LLGVNAVYILVFLVAVLVLLM).

It belongs to the protein disulfide isomerase family.

Its subcellular location is the membrane. Functionally, acts as a protein-folding catalyst that interacts with nascent polypeptides to catalyze the formation, isomerization, and reduction or oxidation of disulfide bonds. May play a role in storage protein biogenesis. This chain is Protein disulfide isomerase-like 5-3 (PDIL5-3), found in Oryza sativa subsp. japonica (Rice).